Consider the following 650-residue polypeptide: Pentatricopeptide repeat-containing protein At1g51965, mitochondrial (650 aa).

Residues 1-23 (MKLLRRRFFNSVNTITRPNRRHY) constitute a mitochondrion transit peptide. PPR repeat units follow at residues 132–169 (DPFLYNRIILILSRSNLPDRFDRVRSILDSMVKSNVHG), 170–200 (NISTVNILIGFFGNTEDLQMCLRLVKKWDLK), 202–236 (NSFTYKCLLQAYLRSRDYSKAFDVYCEIRRGGHKL), 237–267 (DIFAYNMLLDALAKDEKACQVFEDMKKRHCR), 269–303 (DEYTYTIMIRTMGRIGKCDEAVGLFNEMITEGLTL), 304–338 (NVVGYNTLMQVLAKGKMVDKAIQVFSRMVETGCRP), 339–369 (NEYTYSLLLNLLVAEGQLVRLDGVVEISKRY), 371–405 (TQGIYSYLVRTLSKLGHVSEAHRLFCDMWSFPVKG), 406–440 (ERDSYMSMLESLCGAGKTIEAIEMLSKIHEKGVVT), 441–475 (DTMMYNTVFSALGKLKQISHIHDLFEKMKKDGPSP), 476–510 (DIFTYNILIASFGRVGEVDEAINIFEELERSDCKP), 511–545 (DIISYNSLINCLGKNGDVDEAHVRFKEMQEKGLNP), 546–580 (DVVTYSTLMECFGKTERVEMAYSLFEEMLVKGCQP), and 581–615 (NIVTYNILLDCLEKNGRTAEAVDLYSKMKQQGLTP).

It belongs to the PPR family. P subfamily.

The protein localises to the mitochondrion. This is Pentatricopeptide repeat-containing protein At1g51965, mitochondrial from Arabidopsis thaliana (Mouse-ear cress).